Here is an 84-residue protein sequence, read N- to C-terminus: Small ribosomal subunit protein bS16 (84 aa).

Belongs to the bacterial ribosomal protein bS16 family.

The sequence is that of Small ribosomal subunit protein bS16 from Burkholderia multivorans (strain ATCC 17616 / 249).